The following is a 1014-amino-acid chain: 2-oxoglutarate dehydrogenase, mitochondrial (1014 aa).

Residues 1–30 (MLRFVSSQTCRYSSRGLLKTSLLKNASTVK) constitute a mitochondrion transit peptide. Residues Arg-306, Asp-406, Asn-439, and Ile-441 each contribute to the thiamine diphosphate site. Mg(2+) contacts are provided by Asp-406, Asn-439, and Ile-441.

It belongs to the alpha-ketoglutarate dehydrogenase family. Component of the 2-oxoglutarate dehydrogenase complex (OGDC), also called alpha-ketoglutarate dehydrogenase (KGDH) complex. The copmplex is composed of the catalytic subunits OGDH (2-oxoglutarate dehydrogenase KGD1; also called E1 subunit), DLST (dihydrolipoamide succinyltransferase KGD2; also called E2 subunit) and DLD (dihydrolipoamide dehydrogenase LPD1; also called E3 subunit), and the assembly factor KGD4. Thiamine diphosphate is required as a cofactor. The cofactor is Mg(2+).

Its subcellular location is the mitochondrion. It is found in the mitochondrion matrix. It localises to the mitochondrion nucleoid. The catalysed reaction is N(6)-[(R)-lipoyl]-L-lysyl-[protein] + 2-oxoglutarate + H(+) = N(6)-[(R)-S(8)-succinyldihydrolipoyl]-L-lysyl-[protein] + CO2. With respect to regulation, catabolite repressed. Its function is as follows. The 2-oxoglutarate dehydrogenase complex catalyzes the overall conversion of 2-oxoglutarate to succinyl-CoA and CO(2). It contains multiple copies of three enzymatic components: 2-oxoglutarate dehydrogenase (E1), dihydrolipoamide succinyltransferase (E2) and lipoamide dehydrogenase (E3). The protein is 2-oxoglutarate dehydrogenase, mitochondrial (KGD1) of Saccharomyces cerevisiae (strain ATCC 204508 / S288c) (Baker's yeast).